Consider the following 383-residue polypeptide: N-acetyldiaminopimelate deacetylase (383 aa).

Asp-72 is a catalytic residue. The active-site Proton acceptor is Glu-131.

This sequence belongs to the peptidase M20A family. N-acetyldiaminopimelate deacetylase subfamily.

It carries out the reaction N-acetyl-(2S,6S)-2,6-diaminopimelate + H2O = (2S,6S)-2,6-diaminopimelate + acetate. It participates in amino-acid biosynthesis; L-lysine biosynthesis via DAP pathway; LL-2,6-diaminopimelate from (S)-tetrahydrodipicolinate (acetylase route): step 3/3. Its function is as follows. Catalyzes the conversion of N-acetyl-diaminopimelate to diaminopimelate and acetate. The protein is N-acetyldiaminopimelate deacetylase of Lacticaseibacillus casei (strain BL23) (Lactobacillus casei).